Reading from the N-terminus, the 778-residue chain is Melanoma-associated antigen D1 (778 aa).

3 disordered regions span residues 41–60 (PTNQ…PTAN), 78–123 (FKVQ…KGPN), and 182–333 (KAWN…PAWQ). Phosphotyrosine is present on Y92. Polar residues-rich tracts occupy residues 104–118 (PNTQ…QNAT), 185–211 (NDTT…SQAD), 225–240 (TAQT…NLES), 253–263 (NNLNVEENSSG), and 300–319 (LAWQ…TPPA). Tandem repeats lie at residues 296–301 (WQTPLA), 302–307 (WQNPSG), 308–313 (WQNQTA), 332–337 (WQNPVA), 338–343 (WQNPVI), 344–349 (WPNPVI), 350–355 (WQNPVI), 356–361 (WPNPIV), 362–367 (WPGPVV), 368–373 (WPNPLA), 374–379 (WQNPPG), 380–385 (WQTPPG), 386–391 (WQTPPG), 392–397 (WQGPPD), 398–403 (WQGPPD), 404–409 (WPLPPD), 410–415 (WPLPPD), 416–421 (WPLPTD), and 422–427 (WPLPPD). The 22 X 6 AA tandem repeats of W-[PQ]-X-P-X-X stretch occupies residues 296 to 444 (WQTPLAWQNP…IPPDWQNLRP (149 aa)). Residues 376 to 412 (NPPGWQTPPGWQTPPGWQGPPDWQGPPDWPLPPDWPL) are disordered. Over residues 377-397 (PPGWQTPPGWQTPPGWQGPPD) the composition is skewed to low complexity. The segment covering 398 to 412 (WQGPPDWPLPPDWPL) has biased composition (pro residues). A 20; approximate repeat occupies 428–432 (WIPAD). 2 repeat units span residues 433-438 (WPIPPD) and 439-444 (WQNLRP). A compositionally biased stretch (low complexity) spans 440 to 455 (QNLRPSPNLRPSPNSR). The interval 440–466 (QNLRPSPNLRPSPNSRASQNPGAAQPR) is disordered. The MAGE domain maps to 471 to 669 (LQERANKLVK…RDWTAQFMEA (199 aa)).

Interacts with DLX5, DLX7 and MSX2 and forms homomultimers. Interacts with UNC5A. Interacts with TRIM28 and PJA1. Interacts with NGFR/p75NTR and RORA. Expressed in bone marrow stromal cells from both multiple myeloma patients and healthy donors. Seems to be ubiquitously expressed.

Its subcellular location is the cytoplasm. The protein resides in the cell membrane. The protein localises to the nucleus. Its function is as follows. Involved in the apoptotic response after nerve growth factor (NGF) binding in neuronal cells. Inhibits cell cycle progression, and facilitates NGFR-mediated apoptosis. May act as a regulator of the function of DLX family members. May enhance ubiquitin ligase activity of RING-type zinc finger-containing E3 ubiquitin-protein ligases. Proposed to act through recruitment and/or stabilization of the Ubl-conjugating enzyme (E2) at the E3:substrate complex. Plays a role in the circadian rhythm regulation. May act as RORA co-regulator, modulating the expression of core clock genes such as BMAL1 and NFIL3, induced, or NR1D1, repressed. The polypeptide is Melanoma-associated antigen D1 (MAGED1) (Homo sapiens (Human)).